A 171-amino-acid chain; its full sequence is bZIP transcription factor 2 (171 aa).

The segment covering 1-24 (MASSSSTYRSSSSSDGGNNNPSDS) has biased composition (low complexity). A disordered region spans residues 1–54 (MASSSSTYRSSSSSDGGNNNPSDSVVTVDERKRKRMLSNRESARRSRMRKQKHV). The region spanning 29-92 (DERKRKRMLS…MKIQAENSVL (64 aa)) is the bZIP domain. The interval 31-52 (RKRKRMLSNRESARRSRMRKQK) is basic motif. The interval 57-71 (LTAQINQLSNDNRQI) is leucine-zipper.

In terms of assembly, forms heterodimers with BZIP9, BZIP10, BZIP25 and BZIP63. Component of a ternary complex composed of BZIP2-BZIP63 heterodimer and KIN10.

Its subcellular location is the nucleus. In terms of biological role, transcription factor that binds to specific DNA sequences in target gene promoters. BZIP2-BZIP63-KIN10 complex binds to the ETFQO promoter to up-regulate its transcription. The chain is bZIP transcription factor 2 from Arabidopsis thaliana (Mouse-ear cress).